Here is a 2185-residue protein sequence, read N- to C-terminus: Genome polyprotein (2185 aa).

The N-myristoyl glycine; by host moiety is linked to residue glycine 2. The Cytoplasmic segment spans residues 2–1495 (GAQVSTQKTG…HVSRAFICLQ (1494 aa)). An amphipathic alpha-helix region spans residues 568–584 (FFQGPVEDAITAAIGRV). Catalysis depends on for protease 2A activity residues histidine 872 and aspartate 890. Zn(2+) is bound by residues cysteine 907 and cysteine 909. Catalysis depends on cysteine 961, which acts as the For protease 2A activity. Residues cysteine 967 and histidine 969 each coordinate Zn(2+). Positions 1101–1173 (NNSWLKKFTE…EQSAPSQSDQ (73 aa)) are membrane-binding. The tract at residues 1101 to 1239 (NNSWLKKFTE…SPGAGKSVAT (139 aa)) is oligomerization. The interval 1122–1126 (AVKIQ) is RNA-binding. The region spanning 1205–1361 (EKKMSNYIQF…SMYSQNGKIN (157 aa)) is the SF3 helicase domain. Zn(2+) is bound by residues cysteine 1369, cysteine 1381, and cysteine 1386. A C4-type; degenerate zinc finger spans residues 1369 to 1386 (CDDECCPVNFKKCCPLVC). The RNA-binding stretch occupies residues 1413 to 1420 (EYNHRHSV). An oligomerization region spans residues 1424–1429 (LEALFQ). The stretch at 1496–1511 (ALTTFVSVAGIIYIIY) is an intramembrane region. Residues 1512–2185 (KLFAGFQGAY…TLRRKWLDSF (674 aa)) lie on the Cytoplasmic side of the membrane. At tyrosine 1521 the chain carries O-(5'-phospho-RNA)-tyrosine. The Peptidase C3 domain occupies 1541–1719 (GPAFEFAVAM…FSAALLKHYF (179 aa)). Residues histidine 1580, glutamate 1611, and cysteine 1687 each act as for protease 3C activity in the active site. The region spanning 1950–2066 (GHLIAFDYSG…SYPWPIDASL (117 aa)) is the RdRp catalytic domain. 2 residues coordinate Mg(2+): aspartate 1956 and aspartate 2052.

It belongs to the picornaviruses polyprotein family. Interacts with capsid protein VP1 and capsid protein VP3 to form heterotrimeric protomers. As to quaternary structure, interacts with capsid protein VP0, and capsid protein VP3 to form heterotrimeric protomers. Five protomers subsequently associate to form pentamers which serve as building blocks for the capsid. Interacts with capsid protein VP2, capsid protein VP3 and capsid protein VP4 following cleavage of capsid protein VP0. Interacts with host CD55. Interacts with host CXADR. In terms of assembly, interacts with capsid protein VP1 and capsid protein VP3 in the mature capsid. Interacts with capsid protein VP0 and capsid protein VP1 to form heterotrimeric protomers. Five protomers subsequently associate to form pentamers which serve as building blocks for the capsid. Interacts with capsid protein VP4 in the mature capsid. Interacts with protein 2C; this interaction may be important for virion morphogenesis. As to quaternary structure, interacts with capsid protein VP1 and capsid protein VP3. In terms of assembly, homodimer. Homohexamer; forms a hexameric ring structure with 6-fold symmetry characteristic of AAA+ ATPases. Interacts (via N-terminus) with host RTN3 (via reticulon domain); this interaction is important for viral replication. Interacts with capsid protein VP3; this interaction may be important for virion morphogenesis. As to quaternary structure, interacts with protein 3CD. In terms of assembly, homodimer. Interacts with host GBF1. Interacts (via GOLD domain) with host ACBD3 (via GOLD domain); this interaction allows the formation of a viral protein 3A/ACBD3 heterotetramer with a 2:2 stoichiometry, which will stimulate the recruitment of host PI4KB in order to synthesize PI4P at the viral RNA replication sites. Interacts with RNA-directed RNA polymerase. As to quaternary structure, interacts with host TICAM1 (via C-terminus). In terms of assembly, interacts with protein 3AB and with RNA-directed RNA polymerase. Interacts with Viral protein genome-linked and with protein 3CD. Mg(2+) is required as a cofactor. Post-translationally, specific enzymatic cleavages in vivo by the viral proteases yield processing intermediates and the mature proteins. In terms of processing, myristoylation is required for the formation of pentamers during virus assembly. Further assembly of 12 pentamers and a molecule of genomic RNA generates the provirion. During virion maturation, immature virions are rendered infectious following cleavage of VP0 into VP4 and VP2. This maturation seems to be an autocatalytic event triggered by the presence of RNA in the capsid and it is followed by a conformational change infectious virion. Post-translationally, myristoylation is required during RNA encapsidation and formation of the mature virus particle. In terms of processing, VPg is uridylylated by the polymerase into VPg-pUpU. This acts as a nucleotide-peptide primer for the genomic RNA replication.

It localises to the virion. It is found in the host cytoplasm. Its subcellular location is the host cytoplasmic vesicle membrane. The protein resides in the host nucleus. It catalyses the reaction a ribonucleoside 5'-triphosphate + H2O = a ribonucleoside 5'-diphosphate + phosphate + H(+). The enzyme catalyses Selective cleavage of Tyr-|-Gly bond in the picornavirus polyprotein.. The catalysed reaction is RNA(n) + a ribonucleoside 5'-triphosphate = RNA(n+1) + diphosphate. It carries out the reaction Selective cleavage of Gln-|-Gly bond in the poliovirus polyprotein. In other picornavirus reactions Glu may be substituted for Gln, and Ser or Thr for Gly.. Its activity is regulated as follows. Replication or transcription is subject to high level of random mutations by the nucleotide analog ribavirin. In terms of biological role, forms an icosahedral capsid of pseudo T=3 symmetry with capsid proteins VP2 and VP3. The capsid is 300 Angstroms in diameter, composed of 60 copies of each capsid protein and enclosing the viral positive strand RNA genome. Capsid protein VP1 mainly forms the vertices of the capsid. Capsid protein VP1 interacts with host CD55 and CXADR to provide virion attachment to target host cells. This attachment induces virion internalization. Tyrosine kinases are probably involved in the entry process. After binding to its receptor, the capsid undergoes conformational changes. Capsid protein VP1 N-terminus (that contains an amphipathic alpha-helix) and capsid protein VP4 are externalized. Together, they shape a pore in the host membrane through which viral genome is translocated to host cell cytoplasm. Its function is as follows. Forms an icosahedral capsid of pseudo T=3 symmetry with capsid proteins VP2 and VP3. The capsid is 300 Angstroms in diameter, composed of 60 copies of each capsid protein and enclosing the viral positive strand RNA genome. Functionally, lies on the inner surface of the capsid shell. After binding to the host receptor, the capsid undergoes conformational changes. Capsid protein VP4 is released, Capsid protein VP1 N-terminus is externalized, and together, they shape a pore in the host membrane through which the viral genome is translocated into the host cell cytoplasm. Component of immature procapsids, which is cleaved into capsid proteins VP4 and VP2 after maturation. Allows the capsid to remain inactive before the maturation step. In terms of biological role, cysteine protease that cleaves viral polyprotein and specific host proteins. It is responsible for the autocatalytic cleavage between the P1 and P2 regions, which is the first cleavage occurring in the polyprotein. Also cleaves the host translation initiation factor EIF4G1, in order to shut down the capped cellular mRNA translation. Inhibits the host nucleus-cytoplasm protein and RNA trafficking by cleaving host members of the nuclear pores. Counteracts stress granule formation probably by antagonizing its assembly or promoting its dissassembly. Cleaves and inhibits host IFIH1/MDA5, thereby inhibiting the type-I IFN production and the establishment of the antiviral state. Cleaves and inhibits host MAVS, thereby inhibiting the type-I IFN production and the establishment of the antiviral state. Its function is as follows. Plays an essential role in the virus replication cycle by acting as a viroporin. Creates a pore in the host endoplasmic reticulum and as a consequence releases Ca2+ in the cytoplasm of infected cell. In turn, high levels of cytoplasmic calcium may trigger membrane trafficking and transport of viral ER-associated proteins to viroplasms, sites of viral genome replication. Functionally, induces and associates with structural rearrangements of intracellular membranes. Displays RNA-binding, nucleotide binding and NTPase activities. May play a role in virion morphogenesis and viral RNA encapsidation by interacting with the capsid protein VP3. Localizes the viral replication complex to the surface of membranous vesicles. Together with protein 3CD binds the Cis-Active RNA Element (CRE) which is involved in RNA synthesis initiation. Acts as a cofactor to stimulate the activity of 3D polymerase, maybe through a nucleid acid chaperone activity. In terms of biological role, localizes the viral replication complex to the surface of membranous vesicles. It inhibits host cell endoplasmic reticulum-to-Golgi apparatus transport and causes the disassembly of the Golgi complex, possibly through GBF1 interaction. This would result in depletion of MHC, trail receptors and IFN receptors at the host cell surface. Plays an essential role in viral RNA replication by recruiting ACBD3 and PI4KB at the viral replication sites, thereby allowing the formation of the rearranged membranous structures where viral replication takes place. Its function is as follows. Acts as a primer for viral RNA replication and remains covalently bound to viral genomic RNA. VPg is uridylylated prior to priming replication into VPg-pUpU. The oriI viral genomic sequence may act as a template for this. The VPg-pUpU is then used as primer on the genomic RNA poly(A) by the RNA-dependent RNA polymerase to replicate the viral genome. During genome replication, the VPg-RNA linkage is removed by the host TDP2, thereby accelerating replication. During the late stage of the replication cycle, host TDP2 is excluded from sites of viral RNA synthesis and encapsidation, allowing for the generation of progeny virions. Functionally, involved in the viral replication complex and viral polypeptide maturation. It exhibits protease activity with a specificity and catalytic efficiency that is different from protease 3C. Protein 3CD lacks polymerase activity. Protein 3CD binds to the 5'UTR of the viral genome. Major viral protease that mediates proteolytic processing of the polyprotein. Cleaves host EIF5B, contributing to host translation shutoff. Cleaves also host PABPC1, contributing to host translation shutoff. Cleaves and inhibits host RIGI, thereby inhibiting the type-I IFN production and the establishment of the antiviral state. Cleaves and inhibits host MAVS, thereby inhibiting the type-I IFN production and the establishment of the antiviral state. Cleaves and inhibits host TICAM1/TRIF, thereby inhibiting the type-I IFN production. Cleaves host NLRP1, triggers host N-glycine-mediated degradation of the autoinhibitory NLRP1 N-terminal fragment. Cleaves host transcription factor TFEB, thereby disrupting host lysosomal functions and enhancing viral infection. In terms of biological role, replicates the viral genomic RNA on the surface of intracellular membranes. May form linear arrays of subunits that propagate along a strong head-to-tail interaction called interface-I. Covalently attaches UMP to a tyrosine of VPg, which is used to prime RNA synthesis. The positive stranded RNA genome is first replicated at virus induced membranous vesicles, creating a dsRNA genomic replication form. This dsRNA is then used as template to synthesize positive stranded RNA genomes. ss(+)RNA genomes are either translated, replicated or encapsidated. This is Genome polyprotein from Coxsackievirus B3 (strain Nancy).